The following is an 80-amino-acid chain: Acyl carrier protein (80 aa).

The 76-residue stretch at 2–77 (KNIEERIKKI…KSIDFIQKKN (76 aa)) folds into the Carrier domain. Residue Ser-37 is modified to O-(pantetheine 4'-phosphoryl)serine.

This sequence belongs to the acyl carrier protein (ACP) family. 4'-phosphopantetheine is transferred from CoA to a specific serine of apo-ACP by AcpS. This modification is essential for activity because fatty acids are bound in thioester linkage to the sulfhydryl of the prosthetic group.

It localises to the cytoplasm. It functions in the pathway lipid metabolism; fatty acid biosynthesis. Carrier of the growing fatty acid chain in fatty acid biosynthesis. This Buchnera aphidicola subsp. Acyrthosiphon pisum (strain APS) (Acyrthosiphon pisum symbiotic bacterium) protein is Acyl carrier protein.